The primary structure comprises 405 residues: Tryptophan synthase beta chain (405 aa).

Position 95 is an N6-(pyridoxal phosphate)lysine (Lys-95).

It belongs to the TrpB family. In terms of assembly, tetramer of two alpha and two beta chains. Requires pyridoxal 5'-phosphate as cofactor.

It catalyses the reaction (1S,2R)-1-C-(indol-3-yl)glycerol 3-phosphate + L-serine = D-glyceraldehyde 3-phosphate + L-tryptophan + H2O. It participates in amino-acid biosynthesis; L-tryptophan biosynthesis; L-tryptophan from chorismate: step 5/5. In terms of biological role, the beta subunit is responsible for the synthesis of L-tryptophan from indole and L-serine. This Pseudomonas entomophila (strain L48) protein is Tryptophan synthase beta chain.